The primary structure comprises 290 residues: Probable septum site-determining protein MinC (290 aa).

Belongs to the MinC family. As to quaternary structure, interacts with MinD and FtsZ.

Its function is as follows. Cell division inhibitor that blocks the formation of polar Z ring septums. Rapidly oscillates between the poles of the cell to destabilize FtsZ filaments that have formed before they mature into polar Z rings. Prevents FtsZ polymerization. The chain is Probable septum site-determining protein MinC from Heliobacterium modesticaldum (strain ATCC 51547 / Ice1).